The primary structure comprises 294 residues: 7,8-dihydropterin-6-methyl-4-(beta-D-ribofuranosyl)-aminobenzene-5'-phosphate synthase (294 aa).

Residues glutamate 116, aspartate 186, lysine 228, and histidine 265 each coordinate substrate.

The protein belongs to the metallo-beta-lactamase superfamily. The cofactor is Mg(2+).

The enzyme catalyses 4-(beta-D-ribofuranosyl)aminobenzene 5'-phosphate + (7,8-dihydropterin-6-yl)methyl diphosphate = N-[(7,8-dihydropterin-6-yl)methyl]-4-(beta-D-ribofuranosyl)aniline 5'-phosphate + diphosphate. Its pathway is cofactor biosynthesis; 5,6,7,8-tetrahydromethanopterin biosynthesis. Functionally, catalyzes the condensation of 6-hydroxymethyl-7,8-dihydropterin pyrophosphate (DHPP) with 4-(beta-D-ribofuranosyl)-aminobenzene-5'-phosphate (beta-RFA-P) to form 7,8-dihydropterin-6-methyl-4-(beta-D-ribofuranosyl)-aminobenzene-5'-phosphate, a precursor in the biosynthesis of 5,6,7,8-tetrahydromethanopterin (H4MPT). To a lesser extent, is able to condense beta-RFA-P with another arylamine, 1-(4-aminophenyl)-1-deoxy-D-ribitol (APDR), to form 7,8-dihydropterin-6-methyl-1-(4-aminophenyl)-1-deoxy-D-ribitol. Dephosphorylated beta-RFA-P is not a substrate. This is 7,8-dihydropterin-6-methyl-4-(beta-D-ribofuranosyl)-aminobenzene-5'-phosphate synthase from Methanocaldococcus jannaschii (strain ATCC 43067 / DSM 2661 / JAL-1 / JCM 10045 / NBRC 100440) (Methanococcus jannaschii).